Consider the following 962-residue polypeptide: Activity-dependent neuroprotective protein 2a (962 aa).

A C2H2-type 1 zinc finger spans residues 75–98; sequence LCCSLCWYSSRSVPTFRSHIHRCH. The C2H2-type 2; degenerate zinc-finger motif lies at 108–130; the sequence is LMCPYCPFVSSPKVTEQHIQFFH. The C2H2-type 3; degenerate zinc-finger motif lies at 165–188; it reads YTCATCGYHDSLLYVMKKHVLVNH. A C2H2-type 4 zinc finger spans residues 219–244; the sequence is YHCKLCKLPAETIEHLLYHILSSEKH. Residues 527–547 form a C2H2-type 5; degenerate zinc finger; it reads VKCLRCKILLTEQGIFQHLLH. 2 consecutive C2H2-type zinc fingers follow at residues 549 to 572 and 650 to 673; these read LKCLFCPQMFYSFKQIMEHSKKEH and NACPFCQVKLQNPEDYELHLQTKH. The segment at 688–712 adopts a C2H2-type 8; degenerate zinc-finger fold; the sequence is YKCIYCFGVYTEKSTPKTISIHVQR. The tract at residues 753–781 is disordered; the sequence is QGAPEFPKPKKEAVTPRNRRRNTKASKTG. A DNA-binding region (homeobox) is located at residues 795–854; it reads PMGMERTSFEDRKDFLSQYFHRKPYVTKTEIELLASRLWINKADVKAHFNSKLTKCLKAI.

It localises to the nucleus. In terms of biological role, may be involved in transcriptional regulation. Required for progression through late erythroid differentiation. May be involved in vasculogenesis. The chain is Activity-dependent neuroprotective protein 2a from Danio rerio (Zebrafish).